The primary structure comprises 311 residues: Serine hydrolase-like protein (311 aa).

The AB hydrolase-1 domain maps to 27–227 (PPVLCLHGWL…FVSKEMFVHS (201 aa)). The active site involves Ser-102. Ser-210 carries the post-translational modification Phosphoserine.

Belongs to the AB hydrolase superfamily. In terms of tissue distribution, ubiquitous. High protein expression in skeletal and cardiac muscle.

The protein localises to the cytoplasm. Its subcellular location is the perinuclear region. It is found in the peroxisome. Its function is as follows. Probable serine hydrolase. May be related to cell muscle hypertrophy. In Mus musculus (Mouse), this protein is Serine hydrolase-like protein (Serhl).